The sequence spans 176 residues: Flavodoxin (176 aa).

The 169-residue stretch at 4 to 172 (IGIFFGTDTG…RLASWLEEIK (169 aa)) folds into the Flavodoxin-like domain.

This sequence belongs to the flavodoxin family. It depends on FMN as a cofactor.

Its function is as follows. Low-potential electron donor to a number of redox enzymes. NifF is the electron donor to nitrogenase. The chain is Flavodoxin (nifF) from Klebsiella pneumoniae.